An 81-amino-acid polypeptide reads, in one-letter code: EC protein I/II (81 aa).

The protein belongs to the metallothionein superfamily. Type 15 family.

Its function is as follows. Binds 5 molecules of zinc. May have a role in Zn(2+) homeostasis during embryogenesis. The protein is EC protein I/II of Triticum aestivum (Wheat).